The sequence spans 460 residues: 3'3'-cGAMP-specific phosphodiesterase 3 (460 aa).

Positions 28–189 (PPEHCIRCCW…IPLFSRIALL (162 aa)) constitute an HD domain. In terms of domain architecture, HD-GYP spans 260 to 455 (DDAYLECIVT…LPDEYTQLPH (196 aa)). Positions 317 and 318 each coordinate a divalent metal cation. The active-site Proton donor is Lys-321. Residues His-346, His-370, His-371, and Asp-399 each contribute to the a divalent metal cation site.

As to quaternary structure, monomer. It depends on Mn(2+) as a cofactor.

The catalysed reaction is 3',3'-cGAMP + H2O = 5'-pApG-3' + H(+). Functionally, phosphodiesterase (PDE) that catalyzes the hydrolysis of 3'3'-cyclic GMP-AMP (3'3'-cGAMP), leading to linear 5'-pApG. Counteracts the function of the 3'3'-cGAMP synthase DncV, and is involved in the modulation of intracellular 3'3'-cGAMP levels. Enhances bacterial chemotaxis and inhibits intestinal colonization in vivo. Thus exerts a crucial role in regulating bacterial infectivity through catalyzing 3'3'-cGAMP degradation. Is specific for 3'3'-cGAMP since it cannot degrade other cGAMP linkage isomers (3'2'-, 2'3'-, and 2'2'-cGAMPs); is also able to hydrolyze c-di-GMP but not c-di-AMP. The polypeptide is 3'3'-cGAMP-specific phosphodiesterase 3 (Vibrio cholerae serotype O1 (strain ATCC 39315 / El Tor Inaba N16961)).